An 878-amino-acid polypeptide reads, in one-letter code: Outer membrane usher protein FimD (878 aa).

Residues 1 to 45 (MSYLNLRLYQRNTQCLHIRKHRLAGFFVRLVVACAFAAQAPLSSA) form the signal peptide. Cys-855 and Cys-877 are joined by a disulfide.

It belongs to the fimbrial export usher family.

Its subcellular location is the cell outer membrane. Functionally, involved in the export and assembly of FimA fimbrial subunits across the outer membrane. This Escherichia coli (strain K12) protein is Outer membrane usher protein FimD (fimD).